Reading from the N-terminus, the 107-residue chain is MFQFAKFSKSKERRLATELGYGFPIGDPWITDGISPWPFASESVLPSQCPGIHPMHSFRSCTQGTLNTTKISMKLTISDCGFEPLTEGFTVLHSTRATTCYHFLFNS.

The protein resides in the mitochondrion. This is an uncharacterized protein from Arabidopsis thaliana (Mouse-ear cress).